The following is a 457-amino-acid chain: Argininosuccinate lyase (457 aa).

The protein belongs to the lyase 1 family. Argininosuccinate lyase subfamily.

It localises to the cytoplasm. The catalysed reaction is 2-(N(omega)-L-arginino)succinate = fumarate + L-arginine. Its pathway is amino-acid biosynthesis; L-arginine biosynthesis; L-arginine from L-ornithine and carbamoyl phosphate: step 3/3. In Escherichia coli O127:H6 (strain E2348/69 / EPEC), this protein is Argininosuccinate lyase.